Here is a 278-residue protein sequence, read N- to C-terminus: Bifunctional protein FolD (278 aa).

Residues 165 to 167, S190, and T231 contribute to the NADP(+) site; that span reads GRS.

It belongs to the tetrahydrofolate dehydrogenase/cyclohydrolase family. Homodimer.

It carries out the reaction (6R)-5,10-methylene-5,6,7,8-tetrahydrofolate + NADP(+) = (6R)-5,10-methenyltetrahydrofolate + NADPH. The enzyme catalyses (6R)-5,10-methenyltetrahydrofolate + H2O = (6R)-10-formyltetrahydrofolate + H(+). It participates in one-carbon metabolism; tetrahydrofolate interconversion. In terms of biological role, catalyzes the oxidation of 5,10-methylenetetrahydrofolate to 5,10-methenyltetrahydrofolate and then the hydrolysis of 5,10-methenyltetrahydrofolate to 10-formyltetrahydrofolate. The polypeptide is Bifunctional protein FolD (Clostridium novyi (strain NT)).